The primary structure comprises 414 residues: O-methyltransferase sirM (414 aa).

D270 contributes to the S-adenosyl-L-methionine binding site. The active-site Proton acceptor is H321.

The protein belongs to the class I-like SAM-binding methyltransferase superfamily. Cation-independent O-methyltransferase family. COMT subfamily.

It participates in mycotoxin biosynthesis. Functionally, O-methyltransferase; part of the gene cluster that mediates the biosynthesis of sirodesmin PL, an epipolythiodioxopiperazine (ETP) characterized by a disulfide bridged cyclic dipeptide and that acts as a phytotoxin which is involved in the blackleg didease of canola. SirD catalyzes the O-prenylation of L-tyrosine (L-Tyr) in the presence of dimethylallyl diphosphate (DMAPP) to yield 4-O-dimethylallyl-L-Tyr, and therefore represents probably the first pathway-specific enzyme in the biosynthesis of sirodesmin PL. 4-O-dimethylallyl-L-Tyr, then undergoes condensation with L-Ser in a reaction catalyzed by the non-ribosomal peptide synthase sirP to form the diketopiperazine (DKP) backbone. Further bishydroxylation of the DKP performed by the cytochrome P450 monooxygenase sirC leads to the production of the intermediate phomamide. This step is essential to form the reactive thiol group required for toxicity of sirodesmin PL. The next steps of sirodesmin biosynthesis are not well understood yet, but some predictions could be made from intermediate compounds identification. Phomamide is converted into phomalizarine via oxidation, probably by sirT. Further oxidation, methylation (by sirM or sirN) and reduction steps convert phomalizarine to deacetyl sirodesmin. Finally, acetyltransferase sirH probably acetylates deacetyl sirodesmin to produce sirodesmin PL. The chain is O-methyltransferase sirM from Leptosphaeria maculans (Blackleg fungus).